The chain runs to 160 residues: Large ribosomal subunit protein uL22c (160 aa).

It belongs to the universal ribosomal protein uL22 family. In terms of assembly, part of the 50S ribosomal subunit.

It localises to the plastid. The protein localises to the chloroplast. Functionally, this protein binds specifically to 23S rRNA. The globular domain of the protein is located near the polypeptide exit tunnel on the outside of the subunit, while an extended beta-hairpin is found that lines the wall of the exit tunnel in the center of the 70S ribosome. The sequence is that of Large ribosomal subunit protein uL22c (rpl22) from Capsella bursa-pastoris (Shepherd's purse).